Consider the following 721-residue polypeptide: Homeobox-leucine zipper protein HDG2 (721 aa).

The interval 17-70 (NNHNYNHEDNNNEGFLRDDEFDSPNTKSGSENQEGGSGNDQDPLHPNKKKRYHR) is disordered. The segment covering 21–34 (YNHEDNNNEGFLRD) has biased composition (basic and acidic residues). Residues 64–123 (KKKRYHRHTQLQIQEMEAFFKECPHPDDKQRKQLSRELNLEPLQVKFWFQNKRTQMKNHH) constitute a DNA-binding region (homeobox). The stretch at 120–194 (KNHHERHENS…DRISAIAAKY (75 aa)) forms a coiled coil. The START domain maps to 242 to 468 (TESDKPVIID…LDRQCERLAS (227 aa)).

Belongs to the HD-ZIP homeobox family. Class IV subfamily. Interacts with AIL7/PLT7, ANT, BBM and AIL1. In terms of tissue distribution, expressed in hairless cell files of the hypocotyl epidermis. Expressed in shoot apical meristem (SAM) with higher levels in L1 cells and the epidermal layer of young leaves. Expressed in primary root tips, in the L1 of apical inflorescence meristems, early flower primordia, carpel epidermis, ovule primordia, nucellus, chalaze and seed coat.

It localises to the nucleus. Functionally, probable transcription factor. Involved, together with PDF2, in the regulation of flower organs development by promoting the expression of APETALA 3 (AP3) in the epidermis and internal cell layers of developing flowers. This Arabidopsis thaliana (Mouse-ear cress) protein is Homeobox-leucine zipper protein HDG2.